The sequence spans 90 residues: Probable Fe(2+)-trafficking protein (90 aa).

The protein belongs to the Fe(2+)-trafficking protein family.

Functionally, could be a mediator in iron transactions between iron acquisition and iron-requiring processes, such as synthesis and/or repair of Fe-S clusters in biosynthetic enzymes. In Thioalkalivibrio sulfidiphilus (strain HL-EbGR7), this protein is Probable Fe(2+)-trafficking protein.